The following is a 488-amino-acid chain: 3-octaprenyl-4-hydroxybenzoate carboxy-lyase (488 aa).

Asn172 provides a ligand contact to Mn(2+). Prenylated FMN contacts are provided by residues Ile175–Arg177, Arg189–Leu191, and Arg194–Gly195. Glu238 is a Mn(2+) binding site. Asp287 serves as the catalytic Proton donor.

The protein belongs to the UbiD family. In terms of assembly, homohexamer. Requires prenylated FMN as cofactor. Mn(2+) serves as cofactor.

The protein resides in the cell membrane. It catalyses the reaction a 4-hydroxy-3-(all-trans-polyprenyl)benzoate + H(+) = a 2-(all-trans-polyprenyl)phenol + CO2. It functions in the pathway cofactor biosynthesis; ubiquinone biosynthesis. Functionally, catalyzes the decarboxylation of 3-octaprenyl-4-hydroxy benzoate to 2-octaprenylphenol, an intermediate step in ubiquinone biosynthesis. The sequence is that of 3-octaprenyl-4-hydroxybenzoate carboxy-lyase from Ectopseudomonas mendocina (strain ymp) (Pseudomonas mendocina).